The primary structure comprises 180 residues: Aspartate 1-decarboxylase (180 aa).

S24 serves as the catalytic Schiff-base intermediate with substrate; via pyruvic acid. S24 is modified (pyruvic acid (Ser)). Position 56 (T56) interacts with substrate. Y57 serves as the catalytic Proton donor. 72-74 contacts substrate; sequence GAA.

The protein belongs to the PanD family. In terms of assembly, heterooctamer of four alpha and four beta subunits. Pyruvate serves as cofactor. Post-translationally, is synthesized initially as an inactive proenzyme, which is activated by self-cleavage at a specific serine bond to produce a beta-subunit with a hydroxyl group at its C-terminus and an alpha-subunit with a pyruvoyl group at its N-terminus.

It is found in the cytoplasm. The enzyme catalyses L-aspartate + H(+) = beta-alanine + CO2. It participates in cofactor biosynthesis; (R)-pantothenate biosynthesis; beta-alanine from L-aspartate: step 1/1. Functionally, catalyzes the pyruvoyl-dependent decarboxylation of aspartate to produce beta-alanine. In Paramagnetospirillum magneticum (strain ATCC 700264 / AMB-1) (Magnetospirillum magneticum), this protein is Aspartate 1-decarboxylase.